An 873-amino-acid chain; its full sequence is MKKELEAKYSYEIVEENRYEWWIQNEYFKANPDSKKPKFSIVLPPPNVTGKLHIGHAWDGSLQDAIIRFKKLNGFDVLYLPGMDHAGISTQVKVEAKLREQGISRFELGREKFLEQAWKWKHEYAAIIRQQWSKLGLAFDYSMEKFTLDDDINKIVTEIFVDFYNKGLIYKGKRIVNWDPMQKTAISNVEVIYKEVEGFMYHFKYMIQGTNEFLNVATTRPETMFADQCLVVNPKDERYTSFIGKKAINPVNNQAIPIIADDYVELDFGTGVMKCTPAHDLNDFEIAVRHNLEKPICMNEDGTINEMGGEEYQGLDRFEARNKIIENLTKEKTFIKAEPMIHQVGFSERSNAIVEPYLSDQWFVKMDSFADMILKLQESNDKIKFFPERFDQVLKKWMENIHDWTISRQLWWGHRIPAWYNKEDKTKIYVGMEAPKDAENWIQDEDVLDTWFSSGLWPFATLMRGEGFESKYFKEYLPNGVLVTGHDIIFSWVSRMIFQTIEYTGQIPFKDVLIHGLVRDEHGAKMSKSLGNGIDPMDVIVNNGSDSLRFSLLTNSTPGQDIRYSDSKVKAAWNFINKLWNASRYVLMNLEEDFKPWEEQAILNSNSLNETDKWVLTEFSKVSKQVNYLIDKYEFAIAGKMLYDFVWNTYCSWYIEFAKVNLNNPKTKEATQQTIVYLLKNILIMLHPYLPFVTEHIYKTLDMKNSILEESWFDKEFVFETDYINVVIELINSIREFRATNNIKNNVLLNWNATNGNLEIITKYNLEINNFLNEFVNANLSINESLVSETTSLSVLDFFIEIPNDDFIDKEKMLEELATKKKELENEISRSERMLSNENFISKAAPSKIEEEKEKYELYKQQLELIQDKLNKM.

The 'HIGH' region signature appears at 46–56 (PNVTGKLHIGH). The 'KMSKS' region motif lies at 525–529 (KMSKS). ATP is bound at residue K528. Residues 804–873 (NDDFIDKEKM…ELIQDKLNKM (70 aa)) adopt a coiled-coil conformation.

This sequence belongs to the class-I aminoacyl-tRNA synthetase family. ValS type 1 subfamily. Monomer.

It localises to the cytoplasm. It carries out the reaction tRNA(Val) + L-valine + ATP = L-valyl-tRNA(Val) + AMP + diphosphate. In terms of biological role, catalyzes the attachment of valine to tRNA(Val). As ValRS can inadvertently accommodate and process structurally similar amino acids such as threonine, to avoid such errors, it has a 'posttransfer' editing activity that hydrolyzes mischarged Thr-tRNA(Val) in a tRNA-dependent manner. The polypeptide is Valine--tRNA ligase (Mesoplasma florum (strain ATCC 33453 / NBRC 100688 / NCTC 11704 / L1) (Acholeplasma florum)).